The following is a 389-amino-acid chain: UDP-N-acetylglucosamine--N-acetylmuramyl-(pentapeptide) pyrophosphoryl-undecaprenol N-acetylglucosamine transferase (389 aa).

Residues 17–19, N137, R179, S213, and Q308 each bind UDP-N-acetyl-alpha-D-glucosamine; that span reads TAG.

It belongs to the glycosyltransferase 28 family. MurG subfamily.

It localises to the cell membrane. It carries out the reaction di-trans,octa-cis-undecaprenyl diphospho-N-acetyl-alpha-D-muramoyl-L-alanyl-D-glutamyl-meso-2,6-diaminopimeloyl-D-alanyl-D-alanine + UDP-N-acetyl-alpha-D-glucosamine = di-trans,octa-cis-undecaprenyl diphospho-[N-acetyl-alpha-D-glucosaminyl-(1-&gt;4)]-N-acetyl-alpha-D-muramoyl-L-alanyl-D-glutamyl-meso-2,6-diaminopimeloyl-D-alanyl-D-alanine + UDP + H(+). Its pathway is cell wall biogenesis; peptidoglycan biosynthesis. Cell wall formation. Catalyzes the transfer of a GlcNAc subunit on undecaprenyl-pyrophosphoryl-MurNAc-pentapeptide (lipid intermediate I) to form undecaprenyl-pyrophosphoryl-MurNAc-(pentapeptide)GlcNAc (lipid intermediate II). The chain is UDP-N-acetylglucosamine--N-acetylmuramyl-(pentapeptide) pyrophosphoryl-undecaprenol N-acetylglucosamine transferase from Rhodococcus erythropolis (strain PR4 / NBRC 100887).